The chain runs to 256 residues: DNA repair protein RecO (256 aa).

The protein belongs to the RecO family.

Functionally, involved in DNA repair and RecF pathway recombination. The protein is DNA repair protein RecO of Anaeromyxobacter sp. (strain Fw109-5).